A 211-amino-acid polypeptide reads, in one-letter code: Molybdenum cofactor guanylyltransferase (211 aa).

GTP-binding positions include 12 to 14 (LAG), Lys25, Asn53, Asp71, and Asp101. Asp101 contributes to the Mg(2+) binding site.

It belongs to the MobA family. Monomer. It depends on Mg(2+) as a cofactor.

Its subcellular location is the cytoplasm. The catalysed reaction is Mo-molybdopterin + GTP + H(+) = Mo-molybdopterin guanine dinucleotide + diphosphate. Its function is as follows. Transfers a GMP moiety from GTP to Mo-molybdopterin (Mo-MPT) cofactor (Moco or molybdenum cofactor) to form Mo-molybdopterin guanine dinucleotide (Mo-MGD) cofactor. In Acidovorax ebreus (strain TPSY) (Diaphorobacter sp. (strain TPSY)), this protein is Molybdenum cofactor guanylyltransferase.